Here is a 318-residue protein sequence, read N- to C-terminus: NADH-ubiquinone oxidoreductase chain 1 (318 aa).

Helical transmembrane passes span 3 to 23 (LINL…LTLL), 69 to 89 (MLFI…WTPL), 102 to 122 (MLFI…SGWA), 144 to 164 (VTLA…TLLS), 171 to 191 (YIWL…STLA), 222 to 242 (LFFL…IILF), 253 to 273 (ELYT…FLWI), and 294 to 314 (LPLT…LAGI).

Belongs to the complex I subunit 1 family. As to quaternary structure, core subunit of respiratory chain NADH dehydrogenase (Complex I) which is composed of 45 different subunits.

It is found in the mitochondrion inner membrane. It catalyses the reaction a ubiquinone + NADH + 5 H(+)(in) = a ubiquinol + NAD(+) + 4 H(+)(out). In terms of biological role, core subunit of the mitochondrial membrane respiratory chain NADH dehydrogenase (Complex I) which catalyzes electron transfer from NADH through the respiratory chain, using ubiquinone as an electron acceptor. Essential for the catalytic activity and assembly of complex I. This Murina florium (Flores tube-nosed bat) protein is NADH-ubiquinone oxidoreductase chain 1 (MT-ND1).